Here is a 504-residue protein sequence, read N- to C-terminus: Anaerobic nitric oxide reductase transcription regulator NorR (504 aa).

Position 57 is a 4-aspartylphosphate (aspartate 57). In terms of domain architecture, Sigma-54 factor interaction spans 187–416 (MIGLSPGMTQ…LEHAIHRAVV (230 aa)). Residues 215–222 (GETGTGKE) and 278–287 (ADNGTLFLDE) each bind ATP. A DNA-binding region (H-T-H motif) is located at residues 479 to 498 (WAACARMLETDVANLHRLAK).

It functions in the pathway nitrogen metabolism; nitric oxide reduction. Functionally, required for the expression of anaerobic nitric oxide (NO) reductase, acts as a transcriptional activator for at least the norVW operon. Activation also requires sigma-54. The polypeptide is Anaerobic nitric oxide reductase transcription regulator NorR (Escherichia coli (strain SE11)).